A 315-amino-acid chain; its full sequence is Acetyl-coenzyme A carboxylase carboxyl transferase subunit alpha (315 aa).

Residues 36–289 enclose the CoA carboxyltransferase C-terminal domain; sequence LSKKRLELME…RKAVAAELKI (254 aa).

This sequence belongs to the AccA family. In terms of assembly, acetyl-CoA carboxylase is a heterohexamer composed of biotin carboxyl carrier protein (AccB), biotin carboxylase (AccC) and two subunits each of ACCase subunit alpha (AccA) and ACCase subunit beta (AccD).

Its subcellular location is the cytoplasm. The enzyme catalyses N(6)-carboxybiotinyl-L-lysyl-[protein] + acetyl-CoA = N(6)-biotinyl-L-lysyl-[protein] + malonyl-CoA. It functions in the pathway lipid metabolism; malonyl-CoA biosynthesis; malonyl-CoA from acetyl-CoA: step 1/1. In terms of biological role, component of the acetyl coenzyme A carboxylase (ACC) complex. First, biotin carboxylase catalyzes the carboxylation of biotin on its carrier protein (BCCP) and then the CO(2) group is transferred by the carboxyltransferase to acetyl-CoA to form malonyl-CoA. This is Acetyl-coenzyme A carboxylase carboxyl transferase subunit alpha from Francisella tularensis subsp. holarctica (strain FTNF002-00 / FTA).